The sequence spans 717 residues: Transport/processing ATP-binding protein ComA (717 aa).

In terms of domain architecture, Peptidase C39 spans 11–138; the sequence is QVDQMDCGVA…EEWTGVTLFM (128 aa). The active site involves cysteine 17. 6 helical membrane passes run 166–186, 205–225, 237–257, 282–302, 306–326, and 397–417; these read GLIANIVLATLLVTVINIVGS, LGIISIGLVIVYIFQQILSYA, LSIDVILSYIKHVFHLPMSFF, TILSIFLDVSTVVIISLVLFS, NLFFMTLLALPIYTVIIFAFM, and VAHLLLNVGILWMGAVLVMDG. Positions 168-450 constitute an ABC transmembrane type-1 domain; that stretch reads IANIVLATLL…IINLQTKLQT (283 aa). Residues 484–717 form the ABC transporter domain; sequence MTFKQVHYKY…GGFYAHLVNS (234 aa). An ATP-binding site is contributed by 517–524; that stretch reads GISGSGKT.

The protein belongs to the ABC transporter superfamily. Competence factor exporter (TC 3.A.1.112.1) family.

It localises to the cell membrane. Functionally, required for induction of competence. Seems to transport the competence-stimulating peptide (CSP). This Streptococcus pneumoniae serotype 4 (strain ATCC BAA-334 / TIGR4) protein is Transport/processing ATP-binding protein ComA (comA).